The primary structure comprises 110 residues: ATP-dependent Clp protease adapter protein ClpS (110 aa).

The span at 1-10 shows a compositional bias: basic and acidic residues; the sequence is MSDDRRRGDE. Residues 1–27 are disordered; the sequence is MSDDRRRGDEDGGAGTGVITKTKPKTK.

It belongs to the ClpS family. Binds to the N-terminal domain of the chaperone ClpA.

Involved in the modulation of the specificity of the ClpAP-mediated ATP-dependent protein degradation. This is ATP-dependent Clp protease adapter protein ClpS from Parvibaculum lavamentivorans (strain DS-1 / DSM 13023 / NCIMB 13966).